The following is a 267-amino-acid chain: Small ribosomal subunit protein uS3 (267 aa).

Residues 43-111 (IRKEMSKDLE…QVQLNIFEVK (69 aa)) form the KH type-2 domain. A disordered region spans residues 216-267 (FEEQQAQQNNRPGRRGGDRRPRRGNRSAAPQAAEAPKAEAPAEAAPAAETKE). Residues 241–267 (RSAAPQAAEAPKAEAPAEAAPAAETKE) show a composition bias toward low complexity.

Belongs to the universal ribosomal protein uS3 family. In terms of assembly, part of the 30S ribosomal subunit. Forms a tight complex with proteins S10 and S14.

Its function is as follows. Binds the lower part of the 30S subunit head. Binds mRNA in the 70S ribosome, positioning it for translation. The chain is Small ribosomal subunit protein uS3 from Bifidobacterium longum (strain DJO10A).